We begin with the raw amino-acid sequence, 621 residues long: 1-deoxy-D-xylulose-5-phosphate synthase (621 aa).

Thiamine diphosphate is bound by residues histidine 80 and 121-123 (GHS). Aspartate 152 contributes to the Mg(2+) binding site. Thiamine diphosphate is bound by residues 153–154 (GA), asparagine 181, tyrosine 288, and glutamate 370. Asparagine 181 provides a ligand contact to Mg(2+).

The protein belongs to the transketolase family. DXPS subfamily. Homodimer. Mg(2+) serves as cofactor. Requires thiamine diphosphate as cofactor.

It catalyses the reaction D-glyceraldehyde 3-phosphate + pyruvate + H(+) = 1-deoxy-D-xylulose 5-phosphate + CO2. It functions in the pathway metabolic intermediate biosynthesis; 1-deoxy-D-xylulose 5-phosphate biosynthesis; 1-deoxy-D-xylulose 5-phosphate from D-glyceraldehyde 3-phosphate and pyruvate: step 1/1. Catalyzes the acyloin condensation reaction between C atoms 2 and 3 of pyruvate and glyceraldehyde 3-phosphate to yield 1-deoxy-D-xylulose-5-phosphate (DXP). The chain is 1-deoxy-D-xylulose-5-phosphate synthase from Shewanella woodyi (strain ATCC 51908 / MS32).